The chain runs to 347 residues: Probable magnetosome protein Mms36 (347 aa).

A helical transmembrane segment spans residues 25 to 45; it reads VLVLYLAIAVVVAVLAWPWLA.

It is found in the magnetosome membrane. In terms of biological role, the 4 genes of this operon collectively influence magnetosome size and number. The polypeptide is Probable magnetosome protein Mms36 (Magnetospirillum gryphiswaldense (strain DSM 6361 / JCM 21280 / NBRC 15271 / MSR-1)).